Here is a 378-residue protein sequence, read N- to C-terminus: 23S rRNA (uracil(747)-C(5))-methyltransferase RlmC (378 aa).

Residues cysteine 3, cysteine 11, cysteine 14, and cysteine 87 each coordinate [4Fe-4S] cluster. 4 residues coordinate S-adenosyl-L-methionine: glutamine 212, phenylalanine 241, glutamate 262, and asparagine 309. The Nucleophile role is filled by cysteine 336.

Belongs to the class I-like SAM-binding methyltransferase superfamily. RNA M5U methyltransferase family. RlmC subfamily.

The enzyme catalyses uridine(747) in 23S rRNA + S-adenosyl-L-methionine = 5-methyluridine(747) in 23S rRNA + S-adenosyl-L-homocysteine + H(+). Its function is as follows. Catalyzes the formation of 5-methyl-uridine at position 747 (m5U747) in 23S rRNA. The polypeptide is 23S rRNA (uracil(747)-C(5))-methyltransferase RlmC (Shewanella halifaxensis (strain HAW-EB4)).